A 304-amino-acid polypeptide reads, in one-letter code: Mycothiol acetyltransferase (304 aa).

N-acetyltransferase domains follow at residues 16–155 and 164–304; these read AHVE…RTGL and VALS…YRRA. E46 lines the 1D-myo-inositol 2-(L-cysteinylamino)-2-deoxy-alpha-D-glucopyranoside pocket. Acetyl-CoA is bound at residue 87 to 89; it reads LVV. 1D-myo-inositol 2-(L-cysteinylamino)-2-deoxy-alpha-D-glucopyranoside-binding residues include E190, K230, and E237. Residues 241-243 and 248-254 each bind acetyl-CoA; these read LGV and AARGLGS. A 1D-myo-inositol 2-(L-cysteinylamino)-2-deoxy-alpha-D-glucopyranoside-binding site is contributed by Y275.

This sequence belongs to the acetyltransferase family. MshD subfamily. As to quaternary structure, monomer.

It catalyses the reaction 1D-myo-inositol 2-(L-cysteinylamino)-2-deoxy-alpha-D-glucopyranoside + acetyl-CoA = mycothiol + CoA + H(+). Its function is as follows. Catalyzes the transfer of acetyl from acetyl-CoA to desacetylmycothiol (Cys-GlcN-Ins) to form mycothiol. This chain is Mycothiol acetyltransferase, found in Clavibacter sepedonicus (Clavibacter michiganensis subsp. sepedonicus).